Reading from the N-terminus, the 189-residue chain is Threonylcarbamoyl-AMP synthase (189 aa).

The region spanning 7-189 is the YrdC-like domain; it reads NPRVNYAANM…LLTGQVVRPS (183 aa).

It belongs to the SUA5 family. TsaC subfamily.

The protein localises to the cytoplasm. It carries out the reaction L-threonine + hydrogencarbonate + ATP = L-threonylcarbamoyladenylate + diphosphate + H2O. Required for the formation of a threonylcarbamoyl group on adenosine at position 37 (t(6)A37) in tRNAs that read codons beginning with adenine. Catalyzes the conversion of L-threonine, HCO(3)(-)/CO(2) and ATP to give threonylcarbamoyl-AMP (TC-AMP) as the acyladenylate intermediate, with the release of diphosphate. The polypeptide is Threonylcarbamoyl-AMP synthase (Cellvibrio japonicus (strain Ueda107) (Pseudomonas fluorescens subsp. cellulosa)).